The primary structure comprises 474 residues: Aromatic amino acid aminotransferase C56E4.03 (474 aa).

It belongs to the class-I pyridoxal-phosphate-dependent aminotransferase family. Pyridoxal 5'-phosphate is required as a cofactor.

The protein resides in the cytoplasm. It catalyses the reaction an aromatic L-alpha-amino acid + 2-oxoglutarate = an aromatic oxo-acid + L-glutamate. Functionally, has aromatic amino acid transaminase activity. The chain is Aromatic amino acid aminotransferase C56E4.03 from Schizosaccharomyces pombe (strain 972 / ATCC 24843) (Fission yeast).